Here is a 469-residue protein sequence, read N- to C-terminus: Argininosuccinate lyase (469 aa).

Belongs to the lyase 1 family. Argininosuccinate lyase subfamily.

Its subcellular location is the cytoplasm. It carries out the reaction 2-(N(omega)-L-arginino)succinate = fumarate + L-arginine. It functions in the pathway amino-acid biosynthesis; L-arginine biosynthesis; L-arginine from L-ornithine and carbamoyl phosphate: step 3/3. This chain is Argininosuccinate lyase, found in Burkholderia mallei (strain NCTC 10247).